An 87-amino-acid polypeptide reads, in one-letter code: Small ribosomal subunit protein bS18 (87 aa).

Belongs to the bacterial ribosomal protein bS18 family. Part of the 30S ribosomal subunit. Forms a tight heterodimer with protein bS6.

In terms of biological role, binds as a heterodimer with protein bS6 to the central domain of the 16S rRNA, where it helps stabilize the platform of the 30S subunit. In Oleidesulfovibrio alaskensis (strain ATCC BAA-1058 / DSM 17464 / G20) (Desulfovibrio alaskensis), this protein is Small ribosomal subunit protein bS18.